The sequence spans 378 residues: MQDVLGNPAGVSSAETWGSWSEKADLGLNIVIVDDQMSARTMLRHVIEDIAPELKVYDFGDPLDALSWCEAGRVDLLLLDYRMPGMDGLEFARRLRRLPSHRDIPIILITIVGDEPIRQAALEAGVIDFLVKPIRPRELRARCSNLLQLRQQSESVKQRALSLEQRLLASMNEVEERERETLSRLARAIEYRDGGTSAFLERMSHVAGLVAEQLGLSEEEVRIIEMAAPLHDMGKIAIPDSVLLKPGKLTEDEMNVMKRHPRIGYELLSGSQNRFIQVGALIALRHHERYDGSGYPDGLVGEAIPLEARIVAVADVFDALLSARPYKEAWTMDAALAYLYAQRGRLFDPRCVDALLRGRAQLEQICGQFSTASARPGV.

The region spanning 29–147 (NIVIVDDQMS…ELRARCSNLL (119 aa)) is the Response regulatory domain. A 4-aspartylphosphate modification is found at Asp-80. In terms of domain architecture, HD-GYP spans 174–371 (VEERERETLS…LEQICGQFST (198 aa)).

Interacts with a subset of GGDEF domain-containing proteins. Post-translationally, phosphorylated and activated by RpfC.

It is found in the cytoplasm. The enzyme catalyses 3',3'-c-di-GMP + 2 H2O = 2 GMP + 2 H(+). Its function is as follows. Member of the two-component regulatory system RpfG/RpfC, which is involved in the perception and response to the diffusible signaling factor (DSF), which is essential for cell-cell signaling. Detection of DSF leads to the positive regulation of biofilm dispersal and the production of virulence factors. Activated RpfG degrades cyclic di-GMP to GMP, leading to the activation of Clp, a global transcriptional regulator that regulates a large set of genes in DSF pathway. May also directly control genes involved in biofilm dispersal. This Xanthomonas campestris pv. campestris (strain 8004) protein is Cyclic di-GMP phosphodiesterase response regulator RpfG (rpfG).